A 485-amino-acid chain; its full sequence is Glutamyl-tRNA(Gln) amidotransferase subunit A (485 aa).

Catalysis depends on charge relay system residues Lys78 and Ser153. Residue Ser177 is the Acyl-ester intermediate of the active site.

The protein belongs to the amidase family. GatA subfamily. In terms of assembly, heterotrimer of A, B and C subunits.

The catalysed reaction is L-glutamyl-tRNA(Gln) + L-glutamine + ATP + H2O = L-glutaminyl-tRNA(Gln) + L-glutamate + ADP + phosphate + H(+). Allows the formation of correctly charged Gln-tRNA(Gln) through the transamidation of misacylated Glu-tRNA(Gln) in organisms which lack glutaminyl-tRNA synthetase. The reaction takes place in the presence of glutamine and ATP through an activated gamma-phospho-Glu-tRNA(Gln). This chain is Glutamyl-tRNA(Gln) amidotransferase subunit A, found in Geotalea daltonii (strain DSM 22248 / JCM 15807 / FRC-32) (Geobacter daltonii).